Here is a 99-residue protein sequence, read N- to C-terminus: MTLFSSISSMSTSMSGSKSSISSFGSGTSMGSNSIACGGCGGSGGILGSGLGLGLGLGLDLTGGSRSRGACGGNRGNGNGNGGMGGGNGSCCGGPCCGI.

The segment at 1 to 29 (MTLFSSISSMSTSMSGSKSSISSFGSGTS) is disordered.

The protein belongs to the hssA/B family.

This Dictyostelium discoideum (Social amoeba) protein is HssA/B-like protein 42 (hssl42).